We begin with the raw amino-acid sequence, 218 residues long: Probable 1-Cys peroxiredoxin (218 aa).

Residues 5–166 form the Thioredoxin domain; sequence WALGDLVPDI…VLRVLDSLQL (162 aa). The Cysteine sulfenic acid (-SOH) intermediate role is filled by cysteine 47.

The protein belongs to the peroxiredoxin family. Prx6 subfamily.

Its subcellular location is the nucleus. It localises to the cytoplasm. It catalyses the reaction a hydroperoxide + [thioredoxin]-dithiol = an alcohol + [thioredoxin]-disulfide + H2O. Its function is as follows. Thiol-specific peroxidase that catalyzes the reduction of hydrogen peroxide and organic hydroperoxides to water and alcohols, respectively. Seems to contribute to the inhibition of germination during stress. Associated with the rehydration events involved in the recovery of the desiccation-tolerant moss. This Syntrichia ruralis (Great hairy screw-moss) protein is Probable 1-Cys peroxiredoxin.